The following is a 207-amino-acid chain: MTKVAVLKQDGSQAAEIELNDAVFAIEPNNAVITDAVLMQRASLRQGTHAVKNRSAVSGGGRKPWKQKGTGRARAGSIREPQFRGGGIVFGPSPRSYAYRINRKAYQLALKSVLSQKVADNKLVVVDALSFEAPKTQDFKKVLANLSADKKTLVVVDEDNENAILSARNLANVQVMTTKGINVLDVVNADKLVIVQSSIEEIQGGLA.

The tract at residues 49–75 is disordered; the sequence is HAVKNRSAVSGGGRKPWKQKGTGRARA.

The protein belongs to the universal ribosomal protein uL4 family. In terms of assembly, part of the 50S ribosomal subunit.

One of the primary rRNA binding proteins, this protein initially binds near the 5'-end of the 23S rRNA. It is important during the early stages of 50S assembly. It makes multiple contacts with different domains of the 23S rRNA in the assembled 50S subunit and ribosome. In terms of biological role, forms part of the polypeptide exit tunnel. The chain is Large ribosomal subunit protein uL4 from Leuconostoc mesenteroides subsp. mesenteroides (strain ATCC 8293 / DSM 20343 / BCRC 11652 / CCM 1803 / JCM 6124 / NCDO 523 / NBRC 100496 / NCIMB 8023 / NCTC 12954 / NRRL B-1118 / 37Y).